The chain runs to 264 residues: Major prion protein (264 aa).

Residues M1 to C24 form the signal peptide. Positions K25 to A241 are interaction with GRB2, ERI3 and SYN1. Positions P28–N119 are disordered. 6 tandem repeats follow at residues P54 to Q62, P63 to Q70, P71 to Q78, P79 to Q86, P87 to Q94, and P95 to Q103. A 6 X 8 AA tandem repeats of P-H-G-G-G-W-G-Q region spans residues P54 to Q103. Over residues Q55–G105 the composition is skewed to gly residues. 12 residues coordinate Cu(2+): H72, G73, G74, H80, G81, G82, H88, G89, G90, H96, G98, and G99. The cysteines at positions 190 and 225 are disulfide-linked. Residues N192 and N208 are each glycosylated (N-linked (GlcNAc...) asparagine). A241 is lipidated: GPI-anchor amidated alanine. Residues S242 to G264 constitute a propeptide, removed in mature form.

Belongs to the prion family. In terms of assembly, monomer and homodimer. Has a tendency to aggregate into amyloid fibrils containing a cross-beta spine, formed by a steric zipper of superposed beta-strands. Soluble oligomers may represent an intermediate stage on the path to fibril formation. Copper binding may promote oligomerization. Interacts with GRB2, APP, ERI3/PRNPIP and SYN1. Mislocalized cytosolically exposed PrP interacts with MGRN1; this interaction alters MGRN1 subcellular location and causes lysosomal enlargement. Interacts with KIAA1191.

The protein localises to the cell membrane. The protein resides in the golgi apparatus. Its primary physiological function is unclear. Has cytoprotective activity against internal or environmental stresses. May play a role in neuronal development and synaptic plasticity. May be required for neuronal myelin sheath maintenance. May play a role in iron uptake and iron homeostasis. Soluble oligomers are toxic to cultured neuroblastoma cells and induce apoptosis (in vitro). Association with GPC1 (via its heparan sulfate chains) targets PRNP to lipid rafts. Also provides Cu(2+) or Zn(2+) for the ascorbate-mediated GPC1 deaminase degradation of its heparan sulfate side chains. The chain is Major prion protein (PRNP) from Antilope cervicapra (Blackbuck).